The primary structure comprises 170 residues: Large ribosomal subunit protein uL5 (170 aa).

It belongs to the universal ribosomal protein uL5 family. In terms of assembly, component of the large ribosomal subunit.

The protein resides in the nucleus. Its subcellular location is the cytoplasm. Component of the ribosome, a large ribonucleoprotein complex responsible for the synthesis of proteins in the cell. The small ribosomal subunit (SSU) binds messenger RNAs (mRNAs) and translates the encoded message by selecting cognate aminoacyl-transfer RNA (tRNA) molecules. The large subunit (LSU) contains the ribosomal catalytic site termed the peptidyl transferase center (PTC), which catalyzes the formation of peptide bonds, thereby polymerizing the amino acids delivered by tRNAs into a polypeptide chain. The nascent polypeptides leave the ribosome through a tunnel in the LSU and interact with protein factors that function in enzymatic processing, targeting, and the membrane insertion of nascent chains at the exit of the ribosomal tunnel. The polypeptide is Large ribosomal subunit protein uL5 (RPL11) (Chlamydomonas reinhardtii (Chlamydomonas smithii)).